Here is a 184-residue protein sequence, read N- to C-terminus: Large ribosomal subunit protein uL6 (184 aa).

Belongs to the universal ribosomal protein uL6 family. Part of the 50S ribosomal subunit.

Its function is as follows. This protein binds to the 23S rRNA, and is important in its secondary structure. It is located near the subunit interface in the base of the L7/L12 stalk, and near the tRNA binding site of the peptidyltransferase center. The sequence is that of Large ribosomal subunit protein uL6 from Pseudothermotoga lettingae (strain ATCC BAA-301 / DSM 14385 / NBRC 107922 / TMO) (Thermotoga lettingae).